Here is a 323-residue protein sequence, read N- to C-terminus: tRNA dimethylallyltransferase (323 aa).

12–19 (GPTAAGKT) is an ATP binding site. Position 14–19 (14–19 (TAAGKT)) interacts with substrate. 2 interaction with substrate tRNA regions span residues 37 to 40 (DSAL) and 161 to 165 (QRLSR).

It belongs to the IPP transferase family. Monomer. Mg(2+) serves as cofactor.

It catalyses the reaction adenosine(37) in tRNA + dimethylallyl diphosphate = N(6)-dimethylallyladenosine(37) in tRNA + diphosphate. Functionally, catalyzes the transfer of a dimethylallyl group onto the adenine at position 37 in tRNAs that read codons beginning with uridine, leading to the formation of N6-(dimethylallyl)adenosine (i(6)A). This Pseudomonas fluorescens (strain Pf0-1) protein is tRNA dimethylallyltransferase.